A 177-amino-acid chain; its full sequence is Probable chemoreceptor glutamine deamidase CheD (177 aa).

It belongs to the CheD family.

The enzyme catalyses L-glutaminyl-[protein] + H2O = L-glutamyl-[protein] + NH4(+). Functionally, probably deamidates glutamine residues to glutamate on methyl-accepting chemotaxis receptors (MCPs), playing an important role in chemotaxis. The polypeptide is Probable chemoreceptor glutamine deamidase CheD (Pseudomonas syringae pv. syringae (strain B728a)).